We begin with the raw amino-acid sequence, 423 residues long: Cytochrome c biogenesis protein Ccs1 (423 aa).

3 helical membrane passes run 11 to 31 (LKFA…GSII), 70 to 90 (NFWF…CTFF), and 153 to 173 (IAPV…IFAS).

The protein belongs to the Ccs1/CcsB family. As to quaternary structure, may interact with CcsA.

The protein resides in the plastid. It localises to the chloroplast thylakoid membrane. In terms of biological role, required during biogenesis of c-type cytochromes (cytochrome c6 and cytochrome f) at the step of heme attachment. The sequence is that of Cytochrome c biogenesis protein Ccs1 from Heterosigma akashiwo (strain NIES-293 / 8280G21-1).